We begin with the raw amino-acid sequence, 277 residues long: Large ribosomal subunit protein mL46 (277 aa).

Lys228 carries the post-translational modification N6-acetyllysine.

This sequence belongs to the mitochondrion-specific ribosomal protein mL46 family. As to quaternary structure, component of the mitochondrial ribosome large subunit (39S) which comprises a 16S rRNA and about 50 distinct proteins.

It is found in the mitochondrion. The protein is Large ribosomal subunit protein mL46 (MRPL46) of Bos taurus (Bovine).